Consider the following 395-residue polypeptide: Dihydroorotate dehydrogenase (quinone), mitochondrial (395 aa).

The transit peptide at 1–10 (MAWRQLKKRA) directs the protein to the mitochondrion; not cleaved. Over 1–10 (MAWRQLKKRA) the chain is Mitochondrial matrix. Residues 11-30 (QDAMVILGGGGLLFASYLTA) form a helical membrane-spanning segment. Over 31–395 (TGDEHFYAEL…TDAIGADHRR (365 aa)) the chain is Mitochondrial intermembrane. Residues 95 to 99 (AGFDK) and Ser-119 contribute to the FMN site. Lys-99 provides a ligand contact to substrate. Residue 144–148 (NRYGF) participates in substrate binding. Positions 180 and 211 each coordinate FMN. Residue 211–216 (NVSSPN) participates in substrate binding. Catalysis depends on Ser-214, which acts as the Nucleophile. 2 residues coordinate FMN: Lys-254 and Thr-282. Residue 283-284 (NS) participates in substrate binding. FMN-binding positions include Gly-305, Gly-334, and 355–356 (YT).

It belongs to the dihydroorotate dehydrogenase family. Type 2 subfamily. In terms of assembly, monomer. FMN serves as cofactor. The uncleaved transit peptide is required for mitochondrial targeting and proper membrane integration.

Its subcellular location is the mitochondrion inner membrane. The enzyme catalyses (S)-dihydroorotate + a quinone = orotate + a quinol. It functions in the pathway pyrimidine metabolism; UMP biosynthesis via de novo pathway; orotate from (S)-dihydroorotate (quinone route): step 1/1. In terms of biological role, catalyzes the conversion of dihydroorotate to orotate with quinone as electron acceptor. Required for UMP biosynthesis via de novo pathway. The protein is Dihydroorotate dehydrogenase (quinone), mitochondrial (DHODH) of Bos taurus (Bovine).